Reading from the N-terminus, the 689-residue chain is Elongation factor G (689 aa).

The 275-residue stretch at Ala-9–Leu-283 folds into the tr-type G domain. Residues Ala-18 to Thr-25, Asp-82 to His-86, and Asn-136 to Asp-139 contribute to the GTP site.

Belongs to the TRAFAC class translation factor GTPase superfamily. Classic translation factor GTPase family. EF-G/EF-2 subfamily.

It is found in the cytoplasm. In terms of biological role, catalyzes the GTP-dependent ribosomal translocation step during translation elongation. During this step, the ribosome changes from the pre-translocational (PRE) to the post-translocational (POST) state as the newly formed A-site-bound peptidyl-tRNA and P-site-bound deacylated tRNA move to the P and E sites, respectively. Catalyzes the coordinated movement of the two tRNA molecules, the mRNA and conformational changes in the ribosome. The chain is Elongation factor G from Clostridium botulinum (strain ATCC 19397 / Type A).